Here is a 564-residue protein sequence, read N- to C-terminus: Eukaryotic translation initiation factor 3 subunit L (564 aa).

S2 carries the N-acetylserine modification. The 207-residue stretch at 331–537 (DAIRVFANIL…IHIADTKVAR (207 aa)) folds into the PCI domain. N6-acetyllysine is present on residues K465 and K549.

It belongs to the eIF-3 subunit L family. As to quaternary structure, component of the eukaryotic translation initiation factor 3 (eIF-3) complex, which is composed of 13 subunits: EIF3A, EIF3B, EIF3C, EIF3D, EIF3E, EIF3F, EIF3G, EIF3H, EIF3I, EIF3J, EIF3K, EIF3L and EIF3M. The eIF-3 complex appears to include 3 stable modules: module A is composed of EIF3A, EIF3B, EIF3G and EIF3I; module B is composed of EIF3F, EIF3H, and EIF3M; and module C is composed of EIF3C, EIF3D, EIF3E, EIF3K and EIF3L. EIF3C of module C binds EIF3B of module A and EIF3H of module B, thereby linking the three modules. EIF3J is a labile subunit that binds to the eIF-3 complex via EIF3B. The eIF-3 complex interacts with RPS6KB1 under conditions of nutrient depletion. Mitogenic stimulation leads to binding and activation of a complex composed of MTOR and RPTOR, leading to phosphorylation and release of RPS6KB1 and binding of EIF4B to eIF-3. Interacts with RRN3.

It is found in the cytoplasm. Its function is as follows. Component of the eukaryotic translation initiation factor 3 (eIF-3) complex, which is required for several steps in the initiation of protein synthesis. The eIF-3 complex associates with the 40S ribosome and facilitates the recruitment of eIF-1, eIF-1A, eIF-2:GTP:methionyl-tRNAi and eIF-5 to form the 43S pre-initiation complex (43S PIC). The eIF-3 complex stimulates mRNA recruitment to the 43S PIC and scanning of the mRNA for AUG recognition. The eIF-3 complex is also required for disassembly and recycling of post-termination ribosomal complexes and subsequently prevents premature joining of the 40S and 60S ribosomal subunits prior to initiation. The eIF-3 complex specifically targets and initiates translation of a subset of mRNAs involved in cell proliferation, including cell cycling, differentiation and apoptosis, and uses different modes of RNA stem-loop binding to exert either translational activation or repression. This Bos taurus (Bovine) protein is Eukaryotic translation initiation factor 3 subunit L.